Consider the following 229-residue polypeptide: Prolactin (229 aa).

The N-terminal stretch at 1 to 30 (MDKKRSSLKGSLLLLLLLVSDLLLCKSVAS) is a signal peptide. C34 and C41 are oxidised to a cystine. A Phosphoserine modification is found at S56. N61 carries an N-linked (GlcNAc...) asparagine; partial glycan. Residues S64 and S120 each carry the phosphoserine modification. Disulfide bonds link C88–C204 and C221–C229.

The protein belongs to the somatotropin/prolactin family. Interacts with PRLR.

The protein localises to the secreted. Its function is as follows. Prolactin acts primarily on the mammary gland by promoting lactation. This Equus caballus (Horse) protein is Prolactin (PRL).